A 1407-amino-acid polypeptide reads, in one-letter code: DNA-directed RNA polymerase subunit beta' (1407 aa).

Zn(2+)-binding residues include Cys-70, Cys-72, Cys-85, and Cys-88. Positions 460, 462, and 464 each coordinate Mg(2+). Residues Cys-814, Cys-888, Cys-895, and Cys-898 each coordinate Zn(2+). Lys-972 is modified (N6-acetyllysine).

Belongs to the RNA polymerase beta' chain family. As to quaternary structure, the RNAP catalytic core consists of 2 alpha, 1 beta, 1 beta' and 1 omega subunit. When a sigma factor is associated with the core the holoenzyme is formed, which can initiate transcription. Mg(2+) is required as a cofactor. Requires Zn(2+) as cofactor.

The enzyme catalyses RNA(n) + a ribonucleoside 5'-triphosphate = RNA(n+1) + diphosphate. In terms of biological role, DNA-dependent RNA polymerase catalyzes the transcription of DNA into RNA using the four ribonucleoside triphosphates as substrates. In Shigella boydii serotype 18 (strain CDC 3083-94 / BS512), this protein is DNA-directed RNA polymerase subunit beta'.